We begin with the raw amino-acid sequence, 178 residues long: MSIEVSNESGIDVSESELVSVARFVIRKMDVNPAAELSMVLLDTAAMADLHMRWMDLPGPTDVMSFPMDELEPGGRPDTPEPGPSMLGDIVLCPEFAAKQAADAGHTLGQELALLTVHGVLHLLGYDHAEPDEEKEMFALQRELLEEWVAEQVEAYHLDRQNEKDRRLLDKSRYFDTP.

3 residues coordinate Zn(2+): His118, His122, and His128.

It belongs to the endoribonuclease YbeY family. Zn(2+) is required as a cofactor.

It is found in the cytoplasm. Its function is as follows. Single strand-specific metallo-endoribonuclease involved in late-stage 70S ribosome quality control and in maturation of the 3' terminus of the 16S rRNA. This chain is Endoribonuclease YbeY, found in Mycolicibacterium gilvum (strain PYR-GCK) (Mycobacterium gilvum (strain PYR-GCK)).